The following is a 236-amino-acid chain: Leucyl/phenylalanyl-tRNA--protein transferase (236 aa).

Belongs to the L/F-transferase family.

The protein resides in the cytoplasm. It catalyses the reaction N-terminal L-lysyl-[protein] + L-leucyl-tRNA(Leu) = N-terminal L-leucyl-L-lysyl-[protein] + tRNA(Leu) + H(+). It carries out the reaction N-terminal L-arginyl-[protein] + L-leucyl-tRNA(Leu) = N-terminal L-leucyl-L-arginyl-[protein] + tRNA(Leu) + H(+). The enzyme catalyses L-phenylalanyl-tRNA(Phe) + an N-terminal L-alpha-aminoacyl-[protein] = an N-terminal L-phenylalanyl-L-alpha-aminoacyl-[protein] + tRNA(Phe). Functions in the N-end rule pathway of protein degradation where it conjugates Leu, Phe and, less efficiently, Met from aminoacyl-tRNAs to the N-termini of proteins containing an N-terminal arginine or lysine. This Shewanella sp. (strain MR-7) protein is Leucyl/phenylalanyl-tRNA--protein transferase.